Here is a 268-residue protein sequence, read N- to C-terminus: MQKIIVFILCCFMTFFLYACSSKFENVNPLGRSFGEFEDTDPLKLGLEPTFPTNQEIPSLISGADLVPITPITPPLTRTSNSANNNAANGINPRFKDEAFNDVLIFENRPAVSDFLTILGPSGAALTVWALAQGNWIWGYTLIDSKGFGDARVWQLLLYPNDFAMIKNAKTNTCLNAYGNGIVHYPCDASNHAQMWKLIPMSNTAVQIKNLGNGKCIQAPITNLYGDFHKVFKIFTVECAKKDNFDQQWFLTTPPFTAKPLYRQGEVR.

Positions 1–19 (MQKIIVFILCCFMTFFLYA) are cleaved as a signal peptide. Cys20 carries N-palmitoyl cysteine lipidation. Cys20 is lipidated: S-diacylglycerol cysteine. A Ricin B-type lectin domain is found at 112–252 (VSDFLTILGP…DNFDQQWFLT (141 aa)). The mediates binding to target cells stretch occupies residues 129–140 (WALAQGNWIWGY).

Heterotrimer of 3 subunits, CdtA, CdtB and CdtC.

It localises to the cell outer membrane. Functionally, CDTs are cytotoxins which induce cell distension, growth arrest in G2/M phase, nucleus swelling, and chromatin fragmentation in HeLa cells. This chain is Cytolethal distending toxin subunit A (cdtA), found in Campylobacter jejuni subsp. jejuni serotype O:2 (strain ATCC 700819 / NCTC 11168).